The sequence spans 628 residues: Modular serine protease (628 aa).

The N-terminal stretch at 1–25 (MQLISFLSNPLFFCALLLKFRTIFA) is a signal peptide. LDL-receptor class A domains are found at residues 26-64 (ACDS…LTCV), 69-107 (HCTK…LRCG), 122-163 (NCKE…ELCG), and 166-204 (ECPA…LLCN). Disulfide bonds link Cys-27–Cys-39, Cys-34–Cys-52, Cys-46–Cys-63, Cys-70–Cys-82, Cys-77–Cys-95, Cys-89–Cys-106, Cys-123–Cys-135, Cys-130–Cys-149, Cys-143–Cys-162, Cys-167–Cys-179, Cys-174–Cys-192, and Cys-186–Cys-203. An N-linked (GlcNAc...) asparagine glycan is attached at Asn-36. Asn-204 carries an N-linked (GlcNAc...) asparagine glycan. Sushi domains follow at residues 222–285 (LGCP…KCVK) and 300–356 (ALCT…RCEQ). Disulfide bonds link Cys-224-Cys-270, Cys-256-Cys-283, Cys-302-Cys-341, and Cys-326-Cys-354. One can recognise a Peptidase S1 domain in the interval 369–621 (SSGGYTINNT…FEDMILNAMN (253 aa)). Asn-376 carries N-linked (GlcNAc...) asparagine glycosylation. An intrachain disulfide couples Cys-399 to Cys-415. Residues His-414, Asp-472, and Ser-563 each act as charge relay system in the active site. The N-linked (GlcNAc...) asparagine glycan is linked to Asn-621.

This sequence belongs to the peptidase S1 family. Post-translationally, may be proteolytically cleaved via an autocatalytic mechanism.

The protein localises to the secreted. Serine protease that plays a key role in innate immunity by activating the Toll pathway in response to infection with Gram-positive bacteria and fungi. During Gram-positive infection, acts downstream of PGRP-SA and upstream of Grass and Spz, and therefore appears to function in a pathway that links detection of Gram-positive lysine-type peptidoglycans to Toll activation. Functions in a separate pathway to the psh-mediated activation of the Toll pathway. The polypeptide is Modular serine protease (Drosophila melanogaster (Fruit fly)).